Reading from the N-terminus, the 200-residue chain is Molybdopterin synthase catalytic subunit (200 aa).

The span at 16-30 (KLPSSHQSVEDSASE) shows a compositional bias: polar residues. The disordered stretch occupies residues 16–43 (KLPSSHQSVEDSASEPSGYEAKDPPQDT). S20 bears the Phosphoserine mark. Substrate is bound by residues 154-155 (HR), K170, and 177-179 (KKE).

The protein belongs to the MoaE family. MOCS2B subfamily. In terms of assembly, heterotetramer; composed of 2 small (MOCS2A) and 2 large (MOCS2B) subunits.

Its subcellular location is the cytoplasm. The protein resides in the cytosol. The catalysed reaction is 2 [molybdopterin-synthase sulfur-carrier protein]-C-terminal-Gly-aminoethanethioate + cyclic pyranopterin phosphate + H2O = molybdopterin + 2 [molybdopterin-synthase sulfur-carrier protein]-C-terminal Gly-Gly + 2 H(+). It participates in cofactor biosynthesis; molybdopterin biosynthesis. Catalytic subunit of the molybdopterin synthase complex, a complex that catalyzes the conversion of precursor Z into molybdopterin. Acts by mediating the incorporation of 2 sulfur atoms from thiocarboxylated MOCS2A into precursor Z to generate a dithiolene group. This chain is Molybdopterin synthase catalytic subunit, found in Rattus norvegicus (Rat).